Consider the following 118-residue polypeptide: Small ribosomal subunit protein uS13 (118 aa).

Residues 94–118 (SLPLRGQRTKTNARTRKGPRKPIKK) are disordered.

It belongs to the universal ribosomal protein uS13 family. As to quaternary structure, part of the 30S ribosomal subunit. Forms a loose heterodimer with protein S19. Forms two bridges to the 50S subunit in the 70S ribosome.

Its function is as follows. Located at the top of the head of the 30S subunit, it contacts several helices of the 16S rRNA. In the 70S ribosome it contacts the 23S rRNA (bridge B1a) and protein L5 of the 50S subunit (bridge B1b), connecting the 2 subunits; these bridges are implicated in subunit movement. Contacts the tRNAs in the A and P-sites. This Vibrio cholerae serotype O1 (strain ATCC 39315 / El Tor Inaba N16961) protein is Small ribosomal subunit protein uS13.